We begin with the raw amino-acid sequence, 687 residues long: Complement C1s subcomponent (687 aa).

An N-terminal signal peptide occupies residues Met1–Ala15. Residues Glu16–Val130 enclose the CUB 1 domain. Glu60, Asp68, Asp113, Asp131, Val132, and Glu134 together coordinate Ca(2+). Cysteines 65 and 83 form a disulfide. The region spanning Asp131–Gly172 is the EGF-like; calcium-binding domain. 3 disulfides stabilise this stretch: Cys135–Cys147, Cys143–Cys156, and Cys158–Cys171. Ca(2+)-binding residues include Asn149, Tyr150, and Gly153. Asn149 is subject to (3R)-3-hydroxyasparagine. The N-linked (GlcNAc...) asparagine glycan is linked to Asn174. 9 disulfides stabilise this stretch: Cys175/Cys202, Cys234/Cys251, Cys294/Cys341, Cys321/Cys354, Cys359/Cys403, Cys386/Cys421, Cys425/Cys548, Cys594/Cys617, and Cys626/Cys658. In terms of domain architecture, CUB 2 spans Cys175–Asp290. 2 Sushi domains span residues Ile292 to Pro356 and Val357 to Pro423. Residue Asn406 is glycosylated (N-linked (GlcNAc...) asparagine). The Peptidase S1 domain maps to Ile438–Gln679. Residues His475 and Asp528 each act as charge relay system in the active site. Ser630 acts as the Charge relay system in catalysis.

The protein belongs to the peptidase S1 family. C1 is a calcium-dependent trimolecular complex of C1q, C1r and C1s in the molar ration of 1:2:2. Activated C1s is an disulfide-linked heterodimer of a heavy chain and a light chain. The iron and 2-oxoglutarate dependent 3-hydroxylation of aspartate and asparagine is (R) stereospecific within EGF domains.

It catalyses the reaction Cleavage of Arg-|-Ala bond in complement component C4 to form C4a and C4b, and Lys(or Arg)-|-Lys bond in complement component C2 to form C2a and C2b: the 'classical' pathway C3 convertase.. Inhibited by SERPING1. In terms of biological role, C1s B chain is a serine protease that combines with C1q and C1r to form C1, the first component of the classical pathway of the complement system. C1r activates C1s so that it can, in turn, activate C2 and C4. Also cleaves IGFBP5 and thereby inhibits the trophic effects of IGF1. In Sus scrofa (Pig), this protein is Complement C1s subcomponent.